The following is an 834-amino-acid chain: Translation initiation factor IF-2 (834 aa).

Positions 1 to 247 (MTEEKKFSGS…STPATVRKEQ (247 aa)) are disordered. Residues 45-101 (GGSRPSRPARPNNNNQNRPNNGGQSQNRNNQNRSNTSTGGQNRSNNGGNRNNRPGSR) are compositionally biased toward low complexity. Positions 109-125 (PMIREKKNWSTKPREGQ) are enriched in basic and acidic residues. 2 stretches are compositionally biased toward low complexity: residues 149-165 (ASAAAKHPKKPAAATKP) and 173-201 (ATKPATASTTTGAGKFGGALASGNNSARN). Residues 224-233 (GSKKSRRIAA) show a composition bias toward basic residues. The tr-type G domain occupies 335-504 (SRPPVVTIMG…LLQAEVLELK (170 aa)). The G1 stretch occupies residues 344–351 (GHVDHGKT). GTP is bound at residue 344–351 (GHVDHGKT). The interval 369-373 (GITQH) is G2. The interval 390-393 (DTPG) is G3. GTP contacts are provided by residues 390-394 (DTPGH) and 444-447 (NKID). Residues 444–447 (NKID) form a G4 region. Positions 480 to 482 (SAK) are G5.

This sequence belongs to the TRAFAC class translation factor GTPase superfamily. Classic translation factor GTPase family. IF-2 subfamily.

The protein localises to the cytoplasm. Functionally, one of the essential components for the initiation of protein synthesis. Protects formylmethionyl-tRNA from spontaneous hydrolysis and promotes its binding to the 30S ribosomal subunits. Also involved in the hydrolysis of GTP during the formation of the 70S ribosomal complex. This is Translation initiation factor IF-2 from Leuconostoc mesenteroides subsp. mesenteroides (strain ATCC 8293 / DSM 20343 / BCRC 11652 / CCM 1803 / JCM 6124 / NCDO 523 / NBRC 100496 / NCIMB 8023 / NCTC 12954 / NRRL B-1118 / 37Y).